Here is a 434-residue protein sequence, read N- to C-terminus: Acyl transferase 15 (434 aa).

Catalysis depends on proton acceptor residues histidine 164 and aspartate 371.

It belongs to the plant acyltransferase family.

Its function is as follows. Involved in the incorporation of ferulate into the cell wall. The sequence is that of Acyl transferase 15 from Oryza sativa subsp. japonica (Rice).